Reading from the N-terminus, the 266-residue chain is N-acetyltransferase ECO1 (266 aa).

The CCHH-type zinc-finger motif lies at 31 to 55; that stretch reads KKCTECQMSYIIDSPADCAEHKKYH. In terms of domain architecture, N-acetyltransferase spans 108-266; it reads TPGKTAEVKA…SGELLIPCYI (159 aa).

Belongs to the acetyltransferase family. ECO subfamily.

Its subcellular location is the nucleus. Functionally, probable acetyltransferase required for the establishment of sister chromatid cohesion and couple the processes of cohesion and DNA replication to ensure that only sister chromatids become paired together. In contrast to the structural cohesins, the deposition and establishment factors are required only during S phase. Acts by acetylating the cohesin complex component SMC3. The chain is N-acetyltransferase ECO1 (ECO1) from Eremothecium gossypii (strain ATCC 10895 / CBS 109.51 / FGSC 9923 / NRRL Y-1056) (Yeast).